The primary structure comprises 551 residues: Glucans biosynthesis protein D (551 aa).

The segment at residues 1–32 (MNRRRFLQGSLAMAALSGTTGLSTLFSRAAFA) is a signal peptide (tat-type signal).

It belongs to the OpgD/OpgG family. In terms of processing, predicted to be exported by the Tat system. The position of the signal peptide cleavage has not been experimentally proven.

The protein localises to the periplasm. The protein operates within glycan metabolism; osmoregulated periplasmic glucan (OPG) biosynthesis. In terms of biological role, probably involved in the control of the structural glucose backbone of osmoregulated periplasmic glucans (OPGs). The protein is Glucans biosynthesis protein D of Enterobacter sp. (strain 638).